Reading from the N-terminus, the 455-residue chain is Bifunctional protein GlmU (455 aa).

Residues 1 to 228 (MTQPLHVIIL…AQEAEGANDP (228 aa)) are pyrophosphorylase. UDP-N-acetyl-alpha-D-glucosamine contacts are provided by residues 10–13 (LAAG), K24, Q76, 81–82 (GT), 103–105 (YGD), G138, E153, N168, and N226. A Mg(2+)-binding site is contributed by D105. N226 provides a ligand contact to Mg(2+). The linker stretch occupies residues 229–249 (WQLSQLERAWQRRAVRALCAQ). Positions 250–455 (GARVRDPARL…DGWKRPLKKS (206 aa)) are N-acetyltransferase. 2 residues coordinate UDP-N-acetyl-alpha-D-glucosamine: R332 and K350. H362 functions as the Proton acceptor in the catalytic mechanism. UDP-N-acetyl-alpha-D-glucosamine is bound by residues Y365 and N376. Acetyl-CoA-binding positions include A379, 385–386 (NY), S404, A422, and R439.

This sequence in the N-terminal section; belongs to the N-acetylglucosamine-1-phosphate uridyltransferase family. It in the C-terminal section; belongs to the transferase hexapeptide repeat family. Homotrimer. Mg(2+) is required as a cofactor.

The protein resides in the cytoplasm. It catalyses the reaction alpha-D-glucosamine 1-phosphate + acetyl-CoA = N-acetyl-alpha-D-glucosamine 1-phosphate + CoA + H(+). It carries out the reaction N-acetyl-alpha-D-glucosamine 1-phosphate + UTP + H(+) = UDP-N-acetyl-alpha-D-glucosamine + diphosphate. The protein operates within nucleotide-sugar biosynthesis; UDP-N-acetyl-alpha-D-glucosamine biosynthesis; N-acetyl-alpha-D-glucosamine 1-phosphate from alpha-D-glucosamine 6-phosphate (route II): step 2/2. It participates in nucleotide-sugar biosynthesis; UDP-N-acetyl-alpha-D-glucosamine biosynthesis; UDP-N-acetyl-alpha-D-glucosamine from N-acetyl-alpha-D-glucosamine 1-phosphate: step 1/1. It functions in the pathway bacterial outer membrane biogenesis; LPS lipid A biosynthesis. Functionally, catalyzes the last two sequential reactions in the de novo biosynthetic pathway for UDP-N-acetylglucosamine (UDP-GlcNAc). The C-terminal domain catalyzes the transfer of acetyl group from acetyl coenzyme A to glucosamine-1-phosphate (GlcN-1-P) to produce N-acetylglucosamine-1-phosphate (GlcNAc-1-P), which is converted into UDP-GlcNAc by the transfer of uridine 5-monophosphate (from uridine 5-triphosphate), a reaction catalyzed by the N-terminal domain. This is Bifunctional protein GlmU from Stenotrophomonas maltophilia (strain K279a).